Reading from the N-terminus, the 223-residue chain is Deoxyribose-phosphate aldolase (223 aa).

The Proton donor/acceptor role is filled by D91. The active-site Schiff-base intermediate with acetaldehyde is K153. Residue K182 is the Proton donor/acceptor of the active site.

This sequence belongs to the DeoC/FbaB aldolase family. DeoC type 1 subfamily.

The protein resides in the cytoplasm. It carries out the reaction 2-deoxy-D-ribose 5-phosphate = D-glyceraldehyde 3-phosphate + acetaldehyde. It participates in carbohydrate degradation; 2-deoxy-D-ribose 1-phosphate degradation; D-glyceraldehyde 3-phosphate and acetaldehyde from 2-deoxy-alpha-D-ribose 1-phosphate: step 2/2. Its function is as follows. Catalyzes a reversible aldol reaction between acetaldehyde and D-glyceraldehyde 3-phosphate to generate 2-deoxy-D-ribose 5-phosphate. This is Deoxyribose-phosphate aldolase from Yersinia pseudotuberculosis serotype O:1b (strain IP 31758).